Reading from the N-terminus, the 492-residue chain is Probable cobyric acid synthase (492 aa).

Positions 252–444 constitute a GATase cobBQ-type domain; sequence PIEVNVVKFS…FHGILENFEF (193 aa). The active-site Nucleophile is the Cys-330. The active site involves His-436.

Belongs to the CobB/CobQ family. CobQ subfamily.

The protein operates within cofactor biosynthesis; adenosylcobalamin biosynthesis. Catalyzes amidations at positions B, D, E, and G on adenosylcobyrinic A,C-diamide. NH(2) groups are provided by glutamine, and one molecule of ATP is hydrogenolyzed for each amidation. This is Probable cobyric acid synthase from Methanococcus maripaludis (strain DSM 14266 / JCM 13030 / NBRC 101832 / S2 / LL).